Consider the following 505-residue polypeptide: ATP nucleosidase Cap17 (505 aa).

Residues 1–229 (MTNTNNEYVL…RLSEIAVELL (229 aa)) form a cyclic oligonucleotide sensing-domain region. The purine nucleoside phosphorylase domain stretch occupies residues 239–505 (LHTPSVLILT…DYLQHGWIRA (267 aa)).

The protein belongs to the Cap17 family.

The catalysed reaction is ATP + H2O = D-ribose 5-triphosphate + adenine. It catalyses the reaction dATP + H2O = 2-deoxyribose 5-triphosphate + adenine. In terms of biological role, effector protein with (d)ATP degrading activity of a CBASS antivirus system. CBASS (cyclic oligonucleotide-based antiphage signaling system) provides immunity against bacteriophage. A CD-NTase protein synthesizes cyclic nucleotides in response to infection; these serve as specific second messenger signals. The signals activate a diverse range of effectors, leading to bacterial cell death and thus abortive phage infection. A type III CBASS system. Expression of this CBASS system (Cap18-Cap6-Cap7-CdnC-CapW-Cap17) in a susceptible E.coli (strain MG1655) confers resistance to bacteriophage P1, leading to cell lysis. By 50 minutes post-infection, ATP levels are markedly reduced while dATP has been eliminated. The C-terminal purine nucleoside phosphorylase (PNP) domain cleaves the N-glycosidic bond of (d)ATP to release adenine and a sugar triphosphate; has no activity on other (d)NTPs, nor on DNA or RNA. In vivo during phage infection has pleoitropic effects on nucleotide accumulation. This protein may be activated by the cognate CD-NTase (CdnC). The polypeptide is ATP nucleosidase Cap17 (Escherichia coli (strain KTE188)).